We begin with the raw amino-acid sequence, 399 residues long: Sex hormone-binding globulin (399 aa).

An N-terminal signal peptide occupies residues 1–29 (MENRDSVASLLLLLLLLPPPHTHQGQVLR). 2 consecutive Laminin G-like domains span residues 43–214 (RYLS…LGNC) and 221–387 (GLFF…THSC). An N-linked (GlcNAc...) asparagine glycan is attached at Asn-160. Cys-191 and Cys-214 form a disulfide bridge. Asn-270, Asn-353, Asn-377, and Asn-393 each carry an N-linked (GlcNAc...) asparagine glycan. Cys-359 and Cys-387 are oxidised to a cystine.

Homodimer. In terms of processing, differentially glycosylated in liver (SHBG) and testis (ABP).

It is found in the secreted. Functionally, functions as an androgen transport protein, but may also be involved in receptor mediated processes. Each dimer binds one molecule of steroid. Specific for 5-alpha-dihydrotestosterone, testosterone, and 17-beta-estradiol. Regulates the plasma metabolic clearance rate of steroid hormones by controlling their plasma concentration. This chain is Sex hormone-binding globulin (SHBG), found in Phodopus sungorus (Striped hairy-footed hamster).